The primary structure comprises 353 residues: G-protein complex alpha subunit gpaA (353 aa).

The tract at residues 1–25 is disordered; that stretch reads MGCGMSTEDKEGKARNEEIENQLKR. Residues 7 to 25 show a composition bias toward basic and acidic residues; the sequence is TEDKEGKARNEEIENQLKR. The G-alpha domain occupies 32 to 353; the sequence is NEIKMLLLGA…QENLRLCGLI (322 aa). Residues 35–48 are G1 motif; it reads KMLLLGAGESGKST. Residues Ser-47 and Thr-181 each coordinate a divalent metal cation. The interval 173-181 is G2 motif; sequence DVLRSRVKT. The G3 motif stretch occupies residues 196–205; it reads YRMFDVGGQR. The G4 motif stretch occupies residues 265-272; the sequence is ILFLNKID. The interval 323-328 is G5 motif; it reads TCATDT.

This sequence belongs to the G-alpha family. G(q) subfamily. G proteins are composed of 3 units; alpha, beta and gamma. The alpha chain contains the guanine nucleotide binding site. Interacts with gprM.

G-protein complex alpha subunit that plays a role in conidiation and regulation of the biosynthesis of secondary metabolites such as dihydroxynaphthalene (DHN)-melanin, via interaction with the G protein-coupled receptor gprM. This is G-protein complex alpha subunit gpaA from Aspergillus fumigatus (strain CBS 144.89 / FGSC A1163 / CEA10) (Neosartorya fumigata).